The primary structure comprises 693 residues: Homoaconitase, mitochondrial (693 aa).

Residues 1–17 constitute a mitochondrion transit peptide; the sequence is MFRVQRLRMFSTSRALY. Positions 338, 405, and 408 each coordinate [4Fe-4S] cluster.

Belongs to the aconitase/IPM isomerase family. Requires [4Fe-4S] cluster as cofactor.

The protein resides in the mitochondrion. The catalysed reaction is (2R,3S)-homoisocitrate = cis-homoaconitate + H2O. Its pathway is amino-acid biosynthesis; L-lysine biosynthesis via AAA pathway; L-alpha-aminoadipate from 2-oxoglutarate: step 3/5. Its function is as follows. Catalyzes the reversible hydration of cis-homoaconitate to (2R,3S)-homoisocitrate, a step in the alpha-aminoadipate pathway for lysine biosynthesis. The protein is Homoaconitase, mitochondrial (LYS4) of Kluyveromyces lactis (strain ATCC 8585 / CBS 2359 / DSM 70799 / NBRC 1267 / NRRL Y-1140 / WM37) (Yeast).